Reading from the N-terminus, the 237-residue chain is MAAASASVLQRCIVSPAGRHSASLIFLHGSGDSGQGLRMWIKQVLNQDLTFQHIKIIYPTAPPRSYTPMKGGISNVWFDRFKITNDCPEHLESIDVMCQVLTDLIDEEVKSGIKKNRILIGGFSMGGSMAMHLAYRNHQDVAGVFALSSFLNKASAVYQALQKSNGVLPELFQCHGTADELVLHSWAEETNSMLKSLGVTTKLHSFPDVYHELSKTELDILKLWILTKLPGEMEKQK.

Ala-2 bears the N-acetylalanine mark. Residues Ser-124, Asp-179, and His-211 each act as charge relay system in the active site.

The protein belongs to the AB hydrolase superfamily. AB hydrolase 2 family.

Its subcellular location is the cytoplasm. It is found in the cytosol. The enzyme catalyses S-hexadecanoyl-L-cysteinyl-[protein] + H2O = L-cysteinyl-[protein] + hexadecanoate + H(+). Functionally, palmitoyl thioesterase that catalyzes depalmitoylation of CGAS and KCNMA1. Acts as a regulator of innate immunity by mediating depalmitoylation of CGAS, thereby preventing CGAS homodimerization and cyclic GMP-AMP synthase activity. Does not exhibit phospholipase nor triacylglycerol lipase activity, able to hydrolyze only short chain substrates due to its shallow active site. The protein is Lysophospholipase-like protein 1 of Pongo abelii (Sumatran orangutan).